Consider the following 372-residue polypeptide: MKQLPVLEPGDKPRKETWYTLTLVGDSPCARVGHSCSYLPPVGDAERGKVFIVGGADPNRSFSDVHTIDLGTHQWDLATSEGLLPRYEHTSFIPSCTPHSIWVFGGADQSGNRNCLQVLNPDTRTWTTPEVTGPPPSPRTFHTSSAAIGDQLYVFGGGERGAQPVQDVQLHVFDANTLTWSQPETHGKPPSPRHGHVMVAAGTKLFIHGGLAGDNFYDDLHCIDISDMKWQKLRPTGAAPTGCAAHSAVAVGKHLYVFGGMTPTGALNTMYQYHIEKQHWTLLKFENSPPTGRLDHSMCIIPWPGTCTSEKEDSNSATVNRDAEKGDSTEKGVTQGGDSQEESQADTLLCFVFGGMNTEGEIYDDCIVTAVD.

Kelch repeat units lie at residues 49 to 95, 100 to 146, 151 to 203, 204 to 250, and 254 to 303; these read KVFI…FIPS, SIWV…TSSA, QLYV…AAGT, KLFI…SAVA, and HLYV…IIPW. A disordered region spans residues 309 to 341; the sequence is SEKEDSNSATVNRDAEKGDSTEKGVTQGGDSQE. The segment covering 321–330 has biased composition (basic and acidic residues); it reads RDAEKGDSTE. The Kelch 6 repeat unit spans residues 349–372; sequence LCFVFGGMNTEGEIYDDCIVTAVD.

As to quaternary structure, interacts with PIKFYVE; the interaction recruits RABEPK to the endosomal membrane. Interacts with RAB9 in its GTP-bound conformation. In terms of processing, phosphorylated on Ser residues by PIKFYVE.

The protein resides in the cytoplasm. The protein localises to the endosome membrane. Functionally, rab9 effector required for endosome to trans-Golgi network (TGN) transport. The protein is Rab9 effector protein with kelch motifs (RABEPK) of Bos taurus (Bovine).